A 123-amino-acid polypeptide reads, in one-letter code: MPSTGTLVIIFAIVLILCIMLLFFYKAAEARNPGVLPPPIPPPTPPPPKKKYDHNEYMEKTDLEPEVKKNHRKWANEAEHLISSSVKGLENLDETAFLANHKGHGFRTFDHAKSLFKEFLKKY.

Residues 5-25 (GTLVIIFAIVLILCIMLLFFY) form a helical membrane-spanning segment. A disordered region spans residues 33–54 (PGVLPPPIPPPTPPPPKKKYDH). A compositionally biased stretch (pro residues) spans 35-47 (VLPPPIPPPTPPP).

The protein belongs to the asfivirus CP123L family.

It localises to the host membrane. The protein resides in the virion. This is an uncharacterized protein from African swine fever virus (isolate Warthog/Namibia/Wart80/1980) (ASFV).